The following is a 267-amino-acid chain: Indole-3-glycerol phosphate synthase (267 aa).

Belongs to the TrpC family.

The catalysed reaction is 1-(2-carboxyphenylamino)-1-deoxy-D-ribulose 5-phosphate + H(+) = (1S,2R)-1-C-(indol-3-yl)glycerol 3-phosphate + CO2 + H2O. Its pathway is amino-acid biosynthesis; L-tryptophan biosynthesis; L-tryptophan from chorismate: step 4/5. The chain is Indole-3-glycerol phosphate synthase from Cupriavidus necator (strain ATCC 17699 / DSM 428 / KCTC 22496 / NCIMB 10442 / H16 / Stanier 337) (Ralstonia eutropha).